Consider the following 545-residue polypeptide: Glucose-6-phosphate isomerase (545 aa).

The active-site Proton donor is the Glu-351. Residues His-382 and Lys-510 contribute to the active site.

The protein belongs to the GPI family.

Its subcellular location is the cytoplasm. It catalyses the reaction alpha-D-glucose 6-phosphate = beta-D-fructose 6-phosphate. Its pathway is carbohydrate biosynthesis; gluconeogenesis. It functions in the pathway carbohydrate degradation; glycolysis; D-glyceraldehyde 3-phosphate and glycerone phosphate from D-glucose: step 2/4. Its function is as follows. Catalyzes the reversible isomerization of glucose-6-phosphate to fructose-6-phosphate. The polypeptide is Glucose-6-phosphate isomerase (Helicobacter pylori (strain P12)).